Reading from the N-terminus, the 159-residue chain is UPF0225 protein plu2503 (159 aa).

This sequence belongs to the UPF0225 family.

The polypeptide is UPF0225 protein plu2503 (Photorhabdus laumondii subsp. laumondii (strain DSM 15139 / CIP 105565 / TT01) (Photorhabdus luminescens subsp. laumondii)).